Here is a 341-residue protein sequence, read N- to C-terminus: D-aspartate oxidase (341 aa).

Residues Asp-36, Lys-37, Thr-43, Ser-44, Met-50, Gly-307, and Ile-311 each coordinate FAD. The Microbody targeting signal signature appears at 339 to 341 (SKL).

It belongs to the DAMOX/DASOX family. Homotetramer. Interacts with PEX5; the interaction is direct and required for localization of DDO to the peroxisome. It depends on FAD as a cofactor. Expressed in epithelial cells of the renal proximal tubules (not detected in the glomeruli or renal distal tubules), liver, right atrium of heart, lung, chief cells of the gastric mucosa, choroid plexus, pia mater, brain stem, midbrain, pons, medulla oblongata, hypothalamus, hippocampus, cerebral cortex, cerebellum, ependyma, olfactory bulb and the pituitary, pineal, thyroid and adrenal glands (at protein level).

It localises to the peroxisome matrix. Its subcellular location is the cytoplasm. The protein resides in the cytosol. The enzyme catalyses D-aspartate + O2 + H2O = oxaloacetate + H2O2 + NH4(+). It carries out the reaction D-glutamate + O2 + H2O = H2O2 + 2-oxoglutarate + NH4(+). Its function is as follows. Selectively catalyzes the oxidative deamination of acidic amino acids. Suppresses the level of D-aspartate in the brain, an amino acid that can act as an agonist for glutamate receptors. Protects the organism from the toxicity of D-amino acids. May also function in the intestine. The chain is D-aspartate oxidase (DDO) from Sus scrofa (Pig).